A 414-amino-acid chain; its full sequence is Dothistromin biosynthesis peroxidase dotB (414 aa).

Residues 1–18 form the signal peptide; it reads MHFFSAIVLTCLASTAVA. C72 provides a ligand contact to heme. N-linked (GlcNAc...) asparagine glycans are attached at residues N187, N241, and N328.

It belongs to the chloroperoxidase family. The cofactor is heme b.

It functions in the pathway mycotoxin biosynthesis. Its function is as follows. Peroxidase; part of the fragmented gene cluster that mediates the biosynthesis of dothistromin (DOTH), a polyketide toxin very similar in structure to the aflatoxin precursor, versicolorin B. The first step of the pathway is the conversion of acetate to norsolorinic acid (NOR) and requires the fatty acid synthase subunits hexA and hexB, as well as the polyketide synthase pksA. PksA combines a hexanoyl starter unit and 7 malonyl-CoA extender units to synthesize the precursor NOR. The hexanoyl starter unit is provided to the acyl-carrier protein (ACP) domain by the fungal fatty acid synthase hexA/hexB. The second step is the conversion of NOR to averantin (AVN) and requires the norsolorinic acid ketoreductase nor1, which catalyzes the dehydration of norsolorinic acid to form (1'S)-averantin. The cytochrome P450 monooxygenase avnA then catalyzes the hydroxylation of AVN to 5'hydroxyaverantin (HAVN). The next step is performed by adhA that transforms HAVN to averufin (AVF). Averufin might then be converted to hydroxyversicolorone by cypX and avfA. Hydroxyversicolorone is further converted versiconal hemiacetal acetate (VHA) by moxY. VHA is then the substrate for the versiconal hemiacetal acetate esterase est1 to yield versiconal (VAL). Versicolorin B synthase vbsA then converts VAL to versicolorin B (VERB) by closing the bisfuran ring. Then, the activity of the versicolorin B desaturase verB leads to versicolorin A (VERA). DotB, a predicted chloroperoxidase, may perform epoxidation of the A-ring of VERA. Alternatively, a cytochrome P450, such as cypX or avnA could catalyze this step. It is also possible that another, uncharacterized, cytochrome P450 enzyme is responsible for this step. Opening of the epoxide could potentially be achieved by the epoxide hydrolase epoA. However, epoA seems not to be required for DOTH biosynthesis, but other epoxide hydrolases may have the ability to complement this hydrolysis. Alternatively, opening of the epoxide ring could be achieved non-enzymatically. The next step is the deoxygenation of ring A to yield the 5,8-dihydroxyanthraquinone which is most likely catalyzed by the NADPH dehydrogenase encoded by ver1. The last stages of DOTH biosynthesis are proposed to involve hydroxylation of the bisfuran. OrdB and norB might have oxidative roles here. An alternative possibility is that cytochrome P450 monoogenases such as avnA and cypX might perform these steps in addition to previously proposed steps. The protein is Dothistromin biosynthesis peroxidase dotB of Dothistroma septosporum (Red band needle blight fungus).